The sequence spans 502 residues: Probable cytosol aminopeptidase (502 aa).

The Mn(2+) site is built by K265 and D270. K277 is an active-site residue. Mn(2+)-binding residues include D288, D347, and E349. Residue R351 is part of the active site.

The protein belongs to the peptidase M17 family. Requires Mn(2+) as cofactor.

Its subcellular location is the cytoplasm. It carries out the reaction Release of an N-terminal amino acid, Xaa-|-Yaa-, in which Xaa is preferably Leu, but may be other amino acids including Pro although not Arg or Lys, and Yaa may be Pro. Amino acid amides and methyl esters are also readily hydrolyzed, but rates on arylamides are exceedingly low.. The catalysed reaction is Release of an N-terminal amino acid, preferentially leucine, but not glutamic or aspartic acids.. In terms of biological role, presumably involved in the processing and regular turnover of intracellular proteins. Catalyzes the removal of unsubstituted N-terminal amino acids from various peptides. The chain is Probable cytosol aminopeptidase from Rickettsia bellii (strain OSU 85-389).